Here is a 161-residue protein sequence, read N- to C-terminus: uncharacterized protein (161 aa).

This is an uncharacterized protein from Archaeoglobus fulgidus (strain ATCC 49558 / DSM 4304 / JCM 9628 / NBRC 100126 / VC-16).